A 257-amino-acid polypeptide reads, in one-letter code: MIEFRNVSKVYPNGTKGLNNINLKIQKGEFVVMVGLSGAGKSTLLRSVNRLHEITEGEIMIEGESITAAKGKGLRRMRRDIGMIFQSFNLVKRSTVLKNVLAGRVGYHSTLRTTLGLFPKEDLELAFQSLKRVNILEKAYARADELSGGQQQRVSIARALAQEAKIILADEPVASLDPLTTKQVLDDLKKINEDFGITTIVNLHSIDLARQYATRIIGLHAGEIVFDGLVEEATDEKFAEIYGDVAQKSKLLEVAVK.

The ABC transporter domain occupies 2-246; that stretch reads IEFRNVSKVY…KFAEIYGDVA (245 aa). 35-42 provides a ligand contact to ATP; it reads GLSGAGKS.

This sequence belongs to the ABC transporter superfamily. Phosphonates importer (TC 3.A.1.9.1) family. The complex is composed of two ATP-binding proteins (PhnC), two transmembrane proteins (PhnE) and a solute-binding protein (PhnD).

Its subcellular location is the cell membrane. It catalyses the reaction phosphonate(out) + ATP + H2O = phosphonate(in) + ADP + phosphate + H(+). Functionally, part of the ABC transporter complex PhnCDE involved in phosphonates import. Responsible for energy coupling to the transport system. The sequence is that of Phosphonates import ATP-binding protein PhnC from Bacillus cereus (strain ZK / E33L).